The sequence spans 147 residues: Microsomal glutathione S-transferase 2 (147 aa).

Transmembrane regions (helical) follow at residues 6–26, 59–79, and 111–131; these read ILLA…ALQV, FYPI…QVFA, and SLGI…NSFL.

This sequence belongs to the MAPEG family. In terms of assembly, homotrimer. Liver, spleen, skeletal muscle, heart, adrenals, pancreas, prostate, testis, fetal liver, and fetal spleen. Very low expression in lung, brain, placenta and bone marrow. Abundantly expressed in human umbilical vein endothelial cells (at protein level).

It localises to the endoplasmic reticulum membrane. The protein localises to the microsome membrane. It catalyses the reaction RX + glutathione = an S-substituted glutathione + a halide anion + H(+). It carries out the reaction 1-chloro-2,4-dinitrobenzene + glutathione = 2,4-dinitrophenyl-S-glutathione + chloride + H(+). The catalysed reaction is leukotriene C4 = leukotriene A4 + glutathione. The enzyme catalyses (5S)-hydroperoxy-(6E,8Z,11Z,14Z)-eicosatetraenoate + 2 glutathione = (5S)-hydroxy-(6E,8Z,11Z,14Z)-eicosatetraenoate + glutathione disulfide + H2O. Its activity is regulated as follows. Each monomer can bind on GSH molecule but only one subunit is catalytically active. Its function is as follows. Catalyzes several different glutathione-dependent reactions. Catalyzes the glutathione-dependent reduction of lipid hydroperoxides, such as 5-HPETE. Has glutathione transferase activity, toward xenobiotic electrophiles, such as 1-chloro-2, 4-dinitrobenzene (CDNB). Also catalyzes the conjugation of leukotriene A4 with reduced glutathione to form leukotriene C4 (LTC4). Involved in oxidative DNA damage induced by ER stress and anticancer agents by activating LTC4 biosynthetic machinery in nonimmune cells. The polypeptide is Microsomal glutathione S-transferase 2 (MGST2) (Homo sapiens (Human)).